Reading from the N-terminus, the 846-residue chain is Selenocysteine insertion sequence-binding protein 2 (846 aa).

Composition is skewed to basic and acidic residues over residues 151–165 (RRAW…RRAD) and 206–215 (PEFEFSRLDF). 5 disordered regions span residues 151–246 (RRAW…SNMS), 266–288 (TDHT…TREL), 321–440 (TTSS…VPVQ), 448–467 (AALE…RPVV), and 475–613 (VLSK…DSAT). S220 is subject to Phosphoserine. 3 stretches are compositionally biased toward polar residues: residues 220–232 (SPKN…TQKQ), 272–288 (AVTN…TREL), and 321–342 (TTSS…SDPS). The Nuclear localization signal motif lies at 370 to 380 (KKNKKKKEKSK). Polar residues predominate over residues 417–428 (KLQSKQQAQNDF). The segment covering 527 to 536 (ILKERQERMQ) has biased composition (basic and acidic residues). Residues 542-551 (SAVSPTVASD) show a composition bias toward polar residues. The tract at residues 666–687 (LVLGLREVLKHLKLRKLKCIII) is RNA-binding. The disordered stretch occupies residues 774 to 804 (RQEQAGEPGPQTPPSPPMQDPIQSTDEGTLA). Residues 783-792 (PQTPPSPPMQ) show a composition bias toward pro residues.

Ubiquitous.

Its subcellular location is the cytoplasm. The protein resides in the nucleus. Its function is as follows. mRNA-binding protein that binds to the SECIS (selenocysteine insertion sequence) element present in the 3'-UTR of mRNAs encoding selenoproteins and facilitates the incorporation of the rare amino acid selenocysteine. Insertion of selenocysteine at UGA codons is mediated by SECISBP2 and EEFSEC: SECISBP2 (1) specifically binds the SECIS sequence once the 80S ribosome encounters an in-frame UGA codon and (2) contacts the RPS27A/eS31 of the 40S ribosome before ribosome stalling. (3) GTP-bound EEFSEC then delivers selenocysteinyl-tRNA(Sec) to the 80S ribosome and adopts a preaccommodated state conformation. (4) After GTP hydrolysis, EEFSEC dissociates from the assembly, selenocysteinyl-tRNA(Sec) accommodates, and peptide bond synthesis and selenoprotein elongation occur. This Rattus norvegicus (Rat) protein is Selenocysteine insertion sequence-binding protein 2 (Secisbp2).